The chain runs to 180 residues: Type-1 fimbrial protein, C chain (180 aa).

The signal sequence occupies residues 1-23; that stretch reads MKLKFISMAVFSALTLGVATNAS. Cys44 and Cys84 are joined by a disulfide.

It belongs to the fimbrial protein family.

It is found in the fimbrium. Functionally, fimbriae (also called pili), polar filaments radiating from the surface of the bacterium to a length of 0.5-1.5 micrometers and numbering 100-300 per cell, enable bacteria to colonize the epithelium of specific host organs. This chain is Type-1 fimbrial protein, C chain (pilC), found in Escherichia coli O6:H1 (strain CFT073 / ATCC 700928 / UPEC).